A 916-amino-acid chain; its full sequence is MAASVQPRQFGHLEPGSAPVRGAASSNGAKAYPPANGIPRRADSPVRGCGFPPLVSPPPRKPPSDGSDDEEEEQEDWRELYGSHLQLEVEPPVRDARDEGTADAWIERNPSLIRLTGKHPLNCEPPLARLMHHGFITPAALHYVRNHGAVPRGDWSTWTVDVTGLVKRPMRLTMDELVNGFPAVEIPVTLVCAGNRRKEQNMVQQTVGFNWGAAGVSTSVWRGARLRDVLRRCGIMPSKGGALNVCFEGAEDLPGGGGSKYGTSITRQWALDPSRDIMLAYMQNGEPLLPDHGFPVRAIIPGCIGGRMVKWVKRIIVTTAESDNYYHYKDNRVLPSHVDAELANADAWWYKPEYIINELNVNSVITTPGHDEILPINGITTQRGYTMKGYAYSGGGKRITRVEVTLDGGETWLVCVLDLPEKPTKYGKHWCWCFWSVEVEVLDLLGAKEIAVRAWDQSHNTQPEKLIWNLMGMMNNCWFKVKVNVCRPHKGEIGLVFEHPTQPGNQTGGWMARQKHLETAEAAAPGLKRSTSTPFMNTTDGKQFTMSEVRKHSSQDSAWIVVHGHVYDCTAFLKDHPGGADSILINAGTDCTEEFDAIHSDKAKALLDTYRIGELITTGAGYSSDNSVHGASNLSQLAPIREAIKAPAPVALSSPRDKVPCQLVDKKELSRDVRLFRFALPSSDQVLGLPVGKHIFVCASIEGKLCMRAYTPTSMVDEVGHFDLLIKVYFKNEHPKFPDGGLMTQYLDSLPVGAYIDVKGPLGHVEYTGRGEFVINGKPRNARRLAMIAGGSGITPMYQVIQSVLRDQPEDTTEMHLVYANRTEDDILLRDELDRWAAEYPDRLKVWYVIDQVKRPEEGWKYGVGFVTEEVLREHVPEGGDDTLALACGPPPMIKFAVSPNLEKMKYDMANSFIVF.

Residues Met1 to Trp77 are disordered. The segment covering Gly66 to Asp76 has biased composition (acidic residues). Residue Cys192 coordinates Mo-molybdopterin. Residues Gly541–Ile616 form the Cytochrome b5 heme-binding domain. His576 and His599 together coordinate heme. One can recognise an FAD-binding FR-type domain in the interval Arg656–Thr768. FAD contacts are provided by residues Arg708–Thr711, Leu725–Tyr729, Phe730, Phe737, Leu742–Thr744, Ser792, and Thr795.

The protein belongs to the nitrate reductase family. In terms of assembly, homodimer. It depends on FAD as a cofactor. Requires heme as cofactor. Mo-molybdopterin serves as cofactor.

It carries out the reaction nitrite + NAD(+) + H2O = nitrate + NADH + H(+). In terms of biological role, nitrate reductase is a key enzyme involved in the first step of nitrate assimilation in plants, fungi and bacteria. This Oryza sativa subsp. japonica (Rice) protein is Nitrate reductase [NADH] 1 (NIA1).